Consider the following 208-residue polypeptide: Large ribosomal subunit protein bL25 (208 aa).

It belongs to the bacterial ribosomal protein bL25 family. CTC subfamily. Part of the 50S ribosomal subunit; part of the 5S rRNA/L5/L18/L25 subcomplex. Contacts the 5S rRNA. Binds to the 5S rRNA independently of L5 and L18.

Its function is as follows. This is one of the proteins that binds to the 5S RNA in the ribosome where it forms part of the central protuberance. This chain is Large ribosomal subunit protein bL25, found in Syntrophotalea carbinolica (strain DSM 2380 / NBRC 103641 / GraBd1) (Pelobacter carbinolicus).